The primary structure comprises 294 residues: Elongation factor Ts (294 aa).

Positions Thr-80–Val-83 are involved in Mg(2+) ion dislocation from EF-Tu.

Belongs to the EF-Ts family.

The protein localises to the cytoplasm. Associates with the EF-Tu.GDP complex and induces the exchange of GDP to GTP. It remains bound to the aminoacyl-tRNA.EF-Tu.GTP complex up to the GTP hydrolysis stage on the ribosome. The protein is Elongation factor Ts of Listeria innocua serovar 6a (strain ATCC BAA-680 / CLIP 11262).